A 209-amino-acid polypeptide reads, in one-letter code: Uracil phosphoribosyltransferase (209 aa).

5-phospho-alpha-D-ribose 1-diphosphate contacts are provided by residues Arg79, Arg104, and 131–139; that span reads DPLLATGNS. Residues Ile194 and 199 to 201 contribute to the uracil site; that span reads GDA. Asp200 lines the 5-phospho-alpha-D-ribose 1-diphosphate pocket.

This sequence belongs to the UPRTase family. The cofactor is Mg(2+).

It catalyses the reaction UMP + diphosphate = 5-phospho-alpha-D-ribose 1-diphosphate + uracil. Its pathway is pyrimidine metabolism; UMP biosynthesis via salvage pathway; UMP from uracil: step 1/1. With respect to regulation, allosterically activated by GTP. In terms of biological role, catalyzes the conversion of uracil and 5-phospho-alpha-D-ribose 1-diphosphate (PRPP) to UMP and diphosphate. This chain is Uracil phosphoribosyltransferase, found in Rhodococcus opacus (strain B4).